The following is a 113-amino-acid chain: Pro-corazonin (113 aa).

The N-terminal stretch at 1–19 (MATNITMFLIVITLTSVAA) is a signal peptide. The residue at position 20 (Gln-20) is a Pyrrolidone carboxylic acid. Asn-30 carries the post-translational modification Asparagine amide. Residues 74-96 (LGPCDTSKTRSTTNPSDTNTSAV) are disordered. Positions 82–96 (TRSTTNPSDTNTSAV) are enriched in polar residues.

Belongs to the corazonin family. In terms of tissue distribution, four pairs of lateral neurosecretory cells in the brains of late instar larvae, pupae and adults.

It localises to the secreted. Functionally, cardioactive peptide. Corazonin is probably involved in the physiological regulation of the heart beat. The sequence is that of Pro-corazonin from Galleria mellonella (Greater wax moth).